The primary structure comprises 378 residues: TelA-like protein SAS1347 (378 aa).

It belongs to the TelA family.

This Staphylococcus aureus (strain MSSA476) protein is TelA-like protein SAS1347.